A 181-amino-acid chain; its full sequence is Large ribosomal subunit protein uL5 (181 aa).

Belongs to the universal ribosomal protein uL5 family. Part of the 50S ribosomal subunit; part of the 5S rRNA/L5/L18/L25 subcomplex. Contacts the 5S rRNA and the P site tRNA. Forms a bridge to the 30S subunit in the 70S ribosome.

Functionally, this is one of the proteins that bind and probably mediate the attachment of the 5S RNA into the large ribosomal subunit, where it forms part of the central protuberance. In the 70S ribosome it contacts protein S13 of the 30S subunit (bridge B1b), connecting the 2 subunits; this bridge is implicated in subunit movement. Contacts the P site tRNA; the 5S rRNA and some of its associated proteins might help stabilize positioning of ribosome-bound tRNAs. The chain is Large ribosomal subunit protein uL5 from Mesomycoplasma hyopneumoniae (strain 7448) (Mycoplasma hyopneumoniae).